The primary structure comprises 654 residues: Tetracycline resistance protein TetQ (654 aa).

The tr-type G domain maps to 1-244 (MNIINLGILA…AISSFILPPE (244 aa)). GTP-binding positions include 10 to 17 (AHIDAGKT), 74 to 78 (DTPGH), and 128 to 131 (NKID).

This sequence belongs to the TRAFAC class translation factor GTPase superfamily. Classic translation factor GTPase family. TetM/TetO subfamily.

In terms of biological role, abolishes the inhibitory effect of tetracyclin on protein synthesis by a non-covalent modification of the ribosomes. This chain is Tetracycline resistance protein TetQ (tetQ), found in Prevotella intermedia.